Reading from the N-terminus, the 399-residue chain is Trimethyllysine dioxygenase (399 aa).

Positions 214, 216, and 360 each coordinate Fe cation.

This sequence belongs to the gamma-BBH/TMLD family. Requires Fe(2+) as cofactor. L-ascorbate is required as a cofactor.

It localises to the cytoplasm. The catalysed reaction is N(6),N(6),N(6)-trimethyl-L-lysine + 2-oxoglutarate + O2 = (3S)-3-hydroxy-N(6),N(6),N(6)-trimethyl-L-lysine + succinate + CO2. It functions in the pathway amine and polyamine biosynthesis; carnitine biosynthesis. Functionally, converts trimethyllysine (TML) into hydroxytrimethyllysine (HTML). In Meyerozyma guilliermondii (strain ATCC 6260 / CBS 566 / DSM 6381 / JCM 1539 / NBRC 10279 / NRRL Y-324) (Yeast), this protein is Trimethyllysine dioxygenase.